The primary structure comprises 285 residues: Tyrosine recombinase XerA (285 aa).

Positions 7 to 84 (IVNSDILEEF…ALKSYFKFEG (78 aa)) constitute a Core-binding (CB) domain. A Tyr recombinase domain is found at 100-274 (SLPKSLTEDE…TTKHLREAIE (175 aa)). Residues Arg-135, Lys-160, His-226, Arg-229, and His-252 contribute to the active site. Residue Tyr-261 is the O-(3'-phospho-DNA)-tyrosine intermediate of the active site.

This sequence belongs to the 'phage' integrase family. XerA subfamily.

It is found in the cytoplasm. Site-specific tyrosine recombinase, which acts by catalyzing the cutting and rejoining of the recombining DNA molecules. In Pyrococcus horikoshii (strain ATCC 700860 / DSM 12428 / JCM 9974 / NBRC 100139 / OT-3), this protein is Tyrosine recombinase XerA.